We begin with the raw amino-acid sequence, 53 residues long: IgW transmembrane form Tm1T3/Tm6T3/Tm3C4 (53 aa).

The segment at 1–25 is disordered; the sequence is VQAVPPDVKGEEGKEEVEDMDGDDN. Positions 13–24 are enriched in acidic residues; the sequence is GKEEVEDMDGDD. A helical membrane pass occupies residues 29-49; sequence VAAFAILFILSFLYSTFVTVV.

As to expression, expressed in the spleen, pancreas, peripheral blood lymphocytes and at low levels in the epigonal organ.

The protein localises to the membrane. In Ginglymostoma cirratum (Nurse shark), this protein is IgW transmembrane form Tm1T3/Tm6T3/Tm3C4.